The sequence spans 332 residues: MKLNKNSELKLSTIDEKEKNLRPETLKEYMGQKNLKEILSVYIKAAKKRKESLEHLLIYGPPGLGKTTLAKIVAKELNVNFKITSGAAMERSGDLVATLSSLQMGDVLFIDEIHRLPKSIEEILYSAMEDYVLDIVLGTENEKKSIRIDLPPFTLIGATTRFGDISSPLRDRFGLILKLNYYSEDELELIIKRTSLVYNTKIDNNTLKKLVKRSRGTPRIANRLFRRIRDFADVYNKGLIDEHISEIALEKLTIDKNGLDDADYTYLKSLIEKFEGGPVGIKNIAANIGEEVSTIEDIYEPYLLKEGYIKRTKRGRIATPLTFKLFKNDKIK.

A large ATPase domain (RuvB-L) region spans residues 1-182; it reads MKLNKNSELK…FGLILKLNYY (182 aa). ATP-binding positions include L21, R22, G63, K66, T67, T68, 129–131, R172, Y182, and R219; that span reads EDY. Residue T67 participates in Mg(2+) binding. Positions 183–253 are small ATPAse domain (RuvB-S); that stretch reads SEDELELIIK…ISEIALEKLT (71 aa). Residues 256–332 are head domain (RuvB-H); it reads KNGLDDADYT…FKLFKNDKIK (77 aa). 2 residues coordinate DNA: R311 and R316.

The protein belongs to the RuvB family. As to quaternary structure, homohexamer. Forms an RuvA(8)-RuvB(12)-Holliday junction (HJ) complex. HJ DNA is sandwiched between 2 RuvA tetramers; dsDNA enters through RuvA and exits via RuvB. An RuvB hexamer assembles on each DNA strand where it exits the tetramer. Each RuvB hexamer is contacted by two RuvA subunits (via domain III) on 2 adjacent RuvB subunits; this complex drives branch migration. In the full resolvosome a probable DNA-RuvA(4)-RuvB(12)-RuvC(2) complex forms which resolves the HJ.

The protein localises to the cytoplasm. It catalyses the reaction ATP + H2O = ADP + phosphate + H(+). Functionally, the RuvA-RuvB-RuvC complex processes Holliday junction (HJ) DNA during genetic recombination and DNA repair, while the RuvA-RuvB complex plays an important role in the rescue of blocked DNA replication forks via replication fork reversal (RFR). RuvA specifically binds to HJ cruciform DNA, conferring on it an open structure. The RuvB hexamer acts as an ATP-dependent pump, pulling dsDNA into and through the RuvAB complex. RuvB forms 2 homohexamers on either side of HJ DNA bound by 1 or 2 RuvA tetramers; 4 subunits per hexamer contact DNA at a time. Coordinated motions by a converter formed by DNA-disengaged RuvB subunits stimulates ATP hydrolysis and nucleotide exchange. Immobilization of the converter enables RuvB to convert the ATP-contained energy into a lever motion, pulling 2 nucleotides of DNA out of the RuvA tetramer per ATP hydrolyzed, thus driving DNA branch migration. The RuvB motors rotate together with the DNA substrate, which together with the progressing nucleotide cycle form the mechanistic basis for DNA recombination by continuous HJ branch migration. Branch migration allows RuvC to scan DNA until it finds its consensus sequence, where it cleaves and resolves cruciform DNA. The chain is Holliday junction branch migration complex subunit RuvB from Phytoplasma mali (strain AT).